Reading from the N-terminus, the 314-residue chain is tRNA-cytidine(32) 2-sulfurtransferase (314 aa).

The PP-loop motif signature appears at 58-63 (SGGKDS). The [4Fe-4S] cluster site is built by C133, C136, and C224.

It belongs to the TtcA family. As to quaternary structure, homodimer. The cofactor is Mg(2+). [4Fe-4S] cluster serves as cofactor.

The protein localises to the cytoplasm. The enzyme catalyses cytidine(32) in tRNA + S-sulfanyl-L-cysteinyl-[cysteine desulfurase] + AH2 + ATP = 2-thiocytidine(32) in tRNA + L-cysteinyl-[cysteine desulfurase] + A + AMP + diphosphate + H(+). It participates in tRNA modification. Its function is as follows. Catalyzes the ATP-dependent 2-thiolation of cytidine in position 32 of tRNA, to form 2-thiocytidine (s(2)C32). The sulfur atoms are provided by the cysteine/cysteine desulfurase (IscS) system. In Polaromonas naphthalenivorans (strain CJ2), this protein is tRNA-cytidine(32) 2-sulfurtransferase.